The chain runs to 252 residues: Orotidine 5'-phosphate decarboxylase (252 aa).

Residues Asp26, Lys48, 75–84, Thr135, Arg196, Gln205, Gly225, and Arg226 contribute to the substrate site; that span reads DLKFHDIPNT. Lys77 (proton donor) is an active-site residue.

Belongs to the OMP decarboxylase family. Type 1 subfamily. Homodimer.

The enzyme catalyses orotidine 5'-phosphate + H(+) = UMP + CO2. Its pathway is pyrimidine metabolism; UMP biosynthesis via de novo pathway; UMP from orotate: step 2/2. Catalyzes the decarboxylation of orotidine 5'-monophosphate (OMP) to uridine 5'-monophosphate (UMP). The sequence is that of Orotidine 5'-phosphate decarboxylase from Sodalis glossinidius (strain morsitans).